The sequence spans 268 residues: Tryptophan synthase alpha chain (268 aa).

Catalysis depends on proton acceptor residues glutamate 49 and aspartate 60.

The protein belongs to the TrpA family. In terms of assembly, tetramer of two alpha and two beta chains.

It carries out the reaction (1S,2R)-1-C-(indol-3-yl)glycerol 3-phosphate + L-serine = D-glyceraldehyde 3-phosphate + L-tryptophan + H2O. The protein operates within amino-acid biosynthesis; L-tryptophan biosynthesis; L-tryptophan from chorismate: step 5/5. In terms of biological role, the alpha subunit is responsible for the aldol cleavage of indoleglycerol phosphate to indole and glyceraldehyde 3-phosphate. The polypeptide is Tryptophan synthase alpha chain (Haemophilus influenzae (strain PittEE)).